Reading from the N-terminus, the 578-residue chain is Arginine--tRNA ligase (578 aa).

The short motif at 127-137 (PNLAKEMHVGH) is the 'HIGH' region element.

Belongs to the class-I aminoacyl-tRNA synthetase family. Monomer.

The protein resides in the cytoplasm. It catalyses the reaction tRNA(Arg) + L-arginine + ATP = L-arginyl-tRNA(Arg) + AMP + diphosphate. The chain is Arginine--tRNA ligase from Pseudomonas fluorescens (strain SBW25).